Here is a 152-residue protein sequence, read N- to C-terminus: UPF0178 protein SAB0630c (152 aa).

It belongs to the UPF0178 family.

The protein is UPF0178 protein SAB0630c of Staphylococcus aureus (strain bovine RF122 / ET3-1).